The chain runs to 131 residues: Ribonuclease P protein component (131 aa).

This sequence belongs to the RnpA family. In terms of assembly, consists of a catalytic RNA component (M1 or rnpB) and a protein subunit.

The catalysed reaction is Endonucleolytic cleavage of RNA, removing 5'-extranucleotides from tRNA precursor.. Functionally, RNaseP catalyzes the removal of the 5'-leader sequence from pre-tRNA to produce the mature 5'-terminus. It can also cleave other RNA substrates such as 4.5S RNA. The protein component plays an auxiliary but essential role in vivo by binding to the 5'-leader sequence and broadening the substrate specificity of the ribozyme. This Cyanothece sp. (strain PCC 7425 / ATCC 29141) protein is Ribonuclease P protein component.